We begin with the raw amino-acid sequence, 432 residues long: Glutamyl-tRNA reductase (432 aa).

Residues 50-53, Ser110, 115-117, and Gln121 contribute to the substrate site; these read TCNR and ETQ. The active-site Nucleophile is Cys51. 190–195 is an NADP(+) binding site; that stretch reads GVGEMS.

The protein belongs to the glutamyl-tRNA reductase family. As to quaternary structure, homodimer.

It carries out the reaction (S)-4-amino-5-oxopentanoate + tRNA(Glu) + NADP(+) = L-glutamyl-tRNA(Glu) + NADPH + H(+). It functions in the pathway porphyrin-containing compound metabolism; protoporphyrin-IX biosynthesis; 5-aminolevulinate from L-glutamyl-tRNA(Glu): step 1/2. In terms of biological role, catalyzes the NADPH-dependent reduction of glutamyl-tRNA(Glu) to glutamate 1-semialdehyde (GSA). The chain is Glutamyl-tRNA reductase from Sulfurimonas denitrificans (strain ATCC 33889 / DSM 1251) (Thiomicrospira denitrificans (strain ATCC 33889 / DSM 1251)).